We begin with the raw amino-acid sequence, 265 residues long: Undecaprenyl-diphosphatase 1 (265 aa).

7 consecutive transmembrane segments (helical) span residues 4 to 24 (IITA…PISS), 42 to 62 (AKTF…ILYH), 84 to 104 (FHVF…HDVI), 108 to 128 (LFQP…MIFA), 184 to 204 (SEFS…LDLL), 217 to 237 (MFAV…VTFL), and 245 to 265 (LKPF…FVLL).

Belongs to the UppP family.

It localises to the cell membrane. The enzyme catalyses di-trans,octa-cis-undecaprenyl diphosphate + H2O = di-trans,octa-cis-undecaprenyl phosphate + phosphate + H(+). In terms of biological role, catalyzes the dephosphorylation of undecaprenyl diphosphate (UPP). Confers resistance to bacitracin. In Bacillus anthracis, this protein is Undecaprenyl-diphosphatase 1.